Here is a 95-residue protein sequence, read N- to C-terminus: UPF0213 protein YPK_3712 (95 aa).

A GIY-YIG domain is found at 4–79; it reads SLWHLYLLRT…KQLSKQQKEK (76 aa).

It belongs to the UPF0213 family.

This chain is UPF0213 protein YPK_3712, found in Yersinia pseudotuberculosis serotype O:3 (strain YPIII).